A 1368-amino-acid chain; its full sequence is Indole-3-acetaldehyde oxidase (1368 aa).

The region spanning 19–108 is the 2Fe-2S ferredoxin-type domain; the sequence is TSLVFAINGQ…GCSITTSDGL (90 aa). [2Fe-2S] cluster is bound by residues cysteine 60, cysteine 65, and cysteine 68. An FAD-binding PCMH-type domain is found at 246-427; that stretch reads LHSRKYRWSS…LSLEIPSWHS (182 aa).

It belongs to the xanthine dehydrogenase family. Aldehyde oxidases (AO) are homodimers and heterodimers of AO subunits. AO-alpha is an AAO1 homodimer; AO-beta is an AAO1-AAO2 heterodimer. [2Fe-2S] cluster serves as cofactor. It depends on FAD as a cofactor. Mo-molybdopterin is required as a cofactor. In terms of tissue distribution, predominantly expressed in roots, seedlings, mature siliques and seeds, and to lower extent in stems and rosettes. In seedlings, mostly expressed in lower part of hypocotyls and roots.

It localises to the cytoplasm. It carries out the reaction indole-3-acetaldehyde + O2 + H2O = (indol-3-yl)acetate + H2O2 + H(+). Strongly inhibited by iodoacetate and potassium cyanide (KCN). Weakly inhibited by 2-mercaptoethanol, dithiothreitol (DTT), menadione, estradiol, 4'-(9-acridinylamino)methanesulfon-m-anisidine (mAMSA), allopurinol and tritonX-100. Not affected by p-chloromercuribenzoate. In higher plants aldehyde oxidases (AO) appear to be homo- and heterodimeric assemblies of AO subunits with probably different physiological functions. AO-alpha may be involved in the biosynthesis of auxin, and in biosynthesis of abscisic acid (ABA) in seeds. In vitro, AO-alpha uses heptaldehyde, protocatechualdehyde, benzaldehyde, indole-3-aldehyde (IAld), indole-3-acetaldehyde (IAAld), cinnamaldehyde and citral as substrates; AO-beta uses IAAld, IAld and naphtaldehyde as substrates. The polypeptide is Indole-3-acetaldehyde oxidase (AAO1) (Arabidopsis thaliana (Mouse-ear cress)).